The primary structure comprises 802 residues: Leucine--tRNA ligase (802 aa).

Residues 39 to 50 carry the 'HIGH' region motif; it reads PYPSGAGLHVGH. Residues 574 to 578 carry the 'KMSKS' region motif; it reads KMSKS. K577 contacts ATP.

The protein belongs to the class-I aminoacyl-tRNA synthetase family.

The protein localises to the cytoplasm. It catalyses the reaction tRNA(Leu) + L-leucine + ATP = L-leucyl-tRNA(Leu) + AMP + diphosphate. This Macrococcus caseolyticus (strain JCSC5402) (Macrococcoides caseolyticum) protein is Leucine--tRNA ligase.